We begin with the raw amino-acid sequence, 179 residues long: ATP-dependent protease subunit HslV (179 aa).

Thr7 is a catalytic residue. Residues Ala163, Cys166, and Thr169 each contribute to the Na(+) site.

It belongs to the peptidase T1B family. HslV subfamily. A double ring-shaped homohexamer of HslV is capped on each side by a ring-shaped HslU homohexamer. The assembly of the HslU/HslV complex is dependent on binding of ATP.

It localises to the cytoplasm. It catalyses the reaction ATP-dependent cleavage of peptide bonds with broad specificity.. Allosterically activated by HslU binding. In terms of biological role, protease subunit of a proteasome-like degradation complex believed to be a general protein degrading machinery. The sequence is that of ATP-dependent protease subunit HslV from Amoebophilus asiaticus (strain 5a2).